The chain runs to 718 residues: Calpastatin (718 aa).

Disordered stretches follow at residues 1–189 (MNPA…MSST) and 210–238 (EKKT…LSSD). Positions 20 to 29 (PHSKKRHRRQ) are enriched in basic residues. 2 stretches are compositionally biased toward basic and acidic residues: residues 30–61 (DAKT…EHTK) and 68–104 (HASD…KPQD). Lysine 32 is covalently cross-linked (Glycyl lysine isopeptide (Lys-Gly) (interchain with G-Cter in SUMO2)). The residue at position 49 (lysine 49) is an N6-acetyllysine. A Phosphoserine modification is found at serine 86. Residues 114 to 124 (AAGTTAAPGKA) are compositionally biased toward low complexity. A phosphoserine mark is found at serine 133, serine 222, and serine 243. The stretch at 170–222 (TQEDSTAYTGPEISDPMSSTYIEELGKREVTIPPKYRELLEKKTGVAGPPPDS) is one Inhibitory domain 1 repeat. Disordered regions lie at residues 266–291 (ESAK…AMSD) and 320–509 (EAKR…QLPA). The residue at position 290 (serine 290) is a Blocked amino end (Ser); in form erythrocyte. The stretch at 307–359 (EPELDLSSIKEVAEAKRKEEKVEKCGEDDETVPAEYRLKPATDKDGKPLLPEP) is one Inhibitory domain 2 repeat. Composition is skewed to basic and acidic residues over residues 320–331 (EAKRKEEKVEKC), 342–377 (YRLK…ELSK), and 384–399 (SNEK…EESK). Phosphoserine is present on residues serine 367, serine 369, and serine 376. Residues 400–411 (AAVPAPVAEAVP) show a composition bias toward low complexity. Serine 444 carries the post-translational modification Phosphoserine. A compositionally biased stretch (basic and acidic residues) spans 446–496 (GRKEADPEEGKPVADKIKEKSKEEEREKLGEKEETIPPDYRLEEAKDKDGK). The stretch at 450–503 (ADPEEGKPVADKIKEKSKEEEREKLGEKEETIPPDYRLEEAKDKDGKPLLPSEP) is one Inhibitory domain 3 repeat. Phosphoserine occurs at positions 520, 531, 579, and 581. The tract at residues 543–718 (VSEVVSQSPA…KPKANEKNAS (176 aa)) is disordered. Residues 566 to 579 (PSNKELDDALDKLS) show a composition bias toward basic and acidic residues. One copy of the Inhibitory domain 4 repeat lies at 587 to 640 (PDPDENKPMEDKVKERAKKEHKDKLGERDDTIPPEYRHLLDQGEQDKPEKPPTK). Composition is skewed to basic and acidic residues over residues 587-650 (PDPD…KPAG) and 706-718 (ETSK…KNAS).

The protein belongs to the protease inhibitor I27 (calpastatin) family.

Its function is as follows. Specific inhibition of calpain (calcium-dependent cysteine protease). Plays a key role in postmortem tenderization of meat and have been proposed to be involved in muscle protein degradation in living tissue. In Oryctolagus cuniculus (Rabbit), this protein is Calpastatin (CAST).